The chain runs to 600 residues: Pyranose dehydrogenase (600 aa).

The signal sequence occupies residues 1-25 (MFPRVVRLNSRLVSFALLGLQIANG). Asn99 and Asn114 each carry an N-linked (GlcNAc...) asparagine glycan. His127 carries the tele-8alpha-FAD histidine modification. N-linked (GlcNAc...) asparagine glycans are attached at residues Asn199, Asn275, Asn342, Asn399, and Asn507. Residue His535 is the Proton acceptor of the active site. N-linked (GlcNAc...) asparagine glycosylation occurs at Asn546. Residue His579 is part of the active site.

This sequence belongs to the GMC oxidoreductase family. As to quaternary structure, monomer. It depends on FAD as a cofactor. In terms of processing, N-glycosylated.

The protein resides in the secreted. The enzyme catalyses pyranose + acceptor = pyranos-2-ulose + reduced acceptor.. The catalysed reaction is pyranose + acceptor = pyranos-3-ulose + reduced acceptor.. It catalyses the reaction pyranose + acceptor = pyranos-2,3-diulose + reduced acceptor.. It carries out the reaction a pyranoside + acceptor = a pyranosid-3-ulose + reduced acceptor.. The enzyme catalyses a pyranoside + acceptor = a pyranosid-3,4-diulose + reduced acceptor.. Its function is as follows. Catalyzes the single-oxidation or sequential double oxidation reaction of carbohydrates primarily at carbon-2 and/or carbon-3 with the concomitant reduction of the flavin. The enzyme exhibits a broad sugar substrate specificity, oxidizing different aldopyranoses to the corresponding C-1, C-2, C-3 or C-1,2, C-2,3 and C-3,4 (di)dehydro sugars with substrate-specific regioselectivity. Accepts only a narrow range of electron acceptors such as substituted benzoquinones and complexed metal ions and reacts extremely slowly with O(2) as acceptor. May play a role in the natural recycling of plant matter by oxidizing all major monosaccharides in lignocellulose and by reducing quinone compounds or reactive radical species generated during lignin depolymerization. The polypeptide is Pyranose dehydrogenase (Agaricus xanthodermus (Poison yellow meadow mushroom)).